We begin with the raw amino-acid sequence, 172 residues long: Ribosome maturation factor RimM (172 aa).

In terms of domain architecture, PRC barrel spans Asp-93–Met-167.

This sequence belongs to the RimM family. As to quaternary structure, binds ribosomal protein uS19.

It is found in the cytoplasm. Functionally, an accessory protein needed during the final step in the assembly of 30S ribosomal subunit, possibly for assembly of the head region. Essential for efficient processing of 16S rRNA. May be needed both before and after RbfA during the maturation of 16S rRNA. It has affinity for free ribosomal 30S subunits but not for 70S ribosomes. The sequence is that of Ribosome maturation factor RimM from Exiguobacterium sp. (strain ATCC BAA-1283 / AT1b).